The following is an 87-amino-acid chain: MKPGIHPEYRPVLFHDTSADVYFLIGSTAETDKTHTHTDGKTYPYVTLDVSSASHPVYTGEQRKTKSEGRVAGFNKRFAGFVGGKGA.

This sequence belongs to the bacterial ribosomal protein bL31 family. Type B subfamily. In terms of assembly, part of the 50S ribosomal subunit.

The polypeptide is Large ribosomal subunit protein bL31B (Pseudomonas aeruginosa (strain LESB58)).